Consider the following 437-residue polypeptide: CMP-5'-(3-aminopropyl)phosphonate hydroxylase (437 aa).

Requires FAD as cofactor.

It carries out the reaction CMP-5'-(3-aminopropyl)phosphonate + NADPH + O2 = CMP-5'-(N-hydroxy-3-aminopropyl)phosphonate + NADP(+) + H2O. It participates in antibiotic biosynthesis. Functionally, hydroxylase involved in the biosynthesis of the phosphonate antibiotic FR-900098, a potent antimalarial agent that acts as an inhibitor of 1-deoxy-D-xylulose 5-phosphate reductoisomerase (DXR), the first enzyme in the nonmevalonate pathway for isoprenoid biosynthesis. Catalyzes the N-hydroxylation of CMP-5'-3-aminopropylphosphonate (CMP-5'-3APn) to CMP-5'-(N-hydroxy-3-aminopropyl)phosphonate (CMP-5'-H3APn). Cannot use CMP-5'-N-acetyl-3-aminopropylphosphonate (CMP-5'-Ac3APn) as a substrate. The chain is CMP-5'-(3-aminopropyl)phosphonate hydroxylase from Streptomyces rubellomurinus (strain ATCC 31215).